Reading from the N-terminus, the 392-residue chain is ABSCISIC ACID-INSENSITIVE 5-like protein 4 (392 aa).

The segment at 1–22 (MGTHIDINNLGGDTSRGNESKP) is disordered. Phosphoserine is present on residues S28, S50, and S96. T135 carries the phosphothreonine modification. Residues 266-297 (NMGGAGGTVTATSPGTSSAENNTWSSPVPYVF) are disordered. The span at 274 to 291 (VTATSPGTSSAENNTWSS) shows a compositional bias: polar residues. Positions 311-374 (VERRQKRMIK…NSELKEFSKQ (64 aa)) constitute a bZIP domain. Positions 313–332 (RRQKRMIKNRESAARSRARK) are basic motif. A leucine-zipper region spans residues 339–360 (LEAEIESLKLVNQDLQKKQAEI).

Belongs to the bZIP family. ABI5 subfamily. In terms of assembly, DNA-binding heterodimer. Interacts with ABI3 and the AFP proteins AFP1, AFP2, AFP3 and AFP4. In terms of processing, phosphorylated by CPK4, CPK11, SRK2D and SRK2I in vitro.

It is found in the nucleus. Functionally, binds to the ABA-responsive element (ABRE). Could participate in abscisic acid-regulated gene expression. This is ABSCISIC ACID-INSENSITIVE 5-like protein 4 (ABF1) from Arabidopsis thaliana (Mouse-ear cress).